A 192-amino-acid polypeptide reads, in one-letter code: Peptidyl-tRNA hydrolase (192 aa).

TRNA is bound at residue Tyr18. Residue His23 is the Proton acceptor of the active site. Positions 69, 71, and 117 each coordinate tRNA.

Belongs to the PTH family. As to quaternary structure, monomer.

It localises to the cytoplasm. It catalyses the reaction an N-acyl-L-alpha-aminoacyl-tRNA + H2O = an N-acyl-L-amino acid + a tRNA + H(+). In terms of biological role, hydrolyzes ribosome-free peptidyl-tRNAs (with 1 or more amino acids incorporated), which drop off the ribosome during protein synthesis, or as a result of ribosome stalling. Functionally, catalyzes the release of premature peptidyl moieties from peptidyl-tRNA molecules trapped in stalled 50S ribosomal subunits, and thus maintains levels of free tRNAs and 50S ribosomes. This chain is Peptidyl-tRNA hydrolase, found in Neisseria gonorrhoeae (strain ATCC 700825 / FA 1090).